Reading from the N-terminus, the 436-residue chain is 3-phosphoshikimate 1-carboxyvinyltransferase (436 aa).

Residues Lys-23, Ser-24, and Arg-28 each coordinate 3-phosphoshikimate. Lys-23 is a phosphoenolpyruvate binding site. Residues Gly-97 and Arg-126 each contribute to the phosphoenolpyruvate site. Residues Ser-171, Gln-173, Asp-323, and Lys-350 each contribute to the 3-phosphoshikimate site. A phosphoenolpyruvate-binding site is contributed by Gln-173. The Proton acceptor role is filled by Asp-323. 2 residues coordinate phosphoenolpyruvate: Arg-354 and Arg-396.

Belongs to the EPSP synthase family. Monomer.

The protein resides in the cytoplasm. It carries out the reaction 3-phosphoshikimate + phosphoenolpyruvate = 5-O-(1-carboxyvinyl)-3-phosphoshikimate + phosphate. It participates in metabolic intermediate biosynthesis; chorismate biosynthesis; chorismate from D-erythrose 4-phosphate and phosphoenolpyruvate: step 6/7. In terms of biological role, catalyzes the transfer of the enolpyruvyl moiety of phosphoenolpyruvate (PEP) to the 5-hydroxyl of shikimate-3-phosphate (S3P) to produce enolpyruvyl shikimate-3-phosphate and inorganic phosphate. This is 3-phosphoshikimate 1-carboxyvinyltransferase from Prochlorococcus marinus (strain AS9601).